The sequence spans 319 residues: G-protein coupled receptor 171 (319 aa).

Over 1–21 (MTNSSTFCPVYRDLEPFTYFF) the chain is Extracellular. N-linked (GlcNAc...) asparagine glycosylation occurs at Asn3. Residues 22–42 (YLVFLIGIIGSCFATWAFIQK) traverse the membrane as a helical segment. Residues 43–48 (TTNHRC) lie on the Cytoplasmic side of the membrane. The helical transmembrane segment at 49 to 69 (VSIYLINLLTADFLLTLALPV) threads the bilayer. The Extracellular portion of the chain corresponds to 70–89 (KIIVDLGVAPWKLRIFHCQV). A helical transmembrane segment spans residues 90-110 (TACLIYINMYLSIIFLAFVSI). Residues 111–132 (DRCLQLIHSCKIYRIQEPGFAK) are Cytoplasmic-facing. The helical transmembrane segment at 133-153 (MISAVVWLMVLLIMVPNMVIP) threads the bilayer. Residues 154–181 (IKDIKEKSNVGCMEFKKEFGRNWHLLTN) are Extracellular-facing. The helical transmembrane segment at 182–202 (FICVAIFLNFSVIILISNFLA) threads the bilayer. The Cytoplasmic segment spans residues 203-224 (IRQLYRNRDNTNYPSVKSALLH). The helical transmembrane segment at 225–245 (ILLVTASYIICFVPYHAVRIP) threads the bilayer. The Extracellular portion of the chain corresponds to 246 to 268 (YTLSQTEVISDCSTRIALFKAKE). Residues 269-289 (ATLLLAVSNLCFDPILYYHLS) traverse the membrane as a helical segment. Residues 290 to 319 (KAFRLKVTETFASPKKSKPLEERLRSENDV) lie on the Cytoplasmic side of the membrane.

It belongs to the G-protein coupled receptor 1 family. In terms of tissue distribution, highly expressed in hypothalamus, including the arcuate nucleus, paraventricular nucleus and dorsomedial hypothalamus. Expressed in periaqueductal gray (at protein level), found primarily in GABAergic neurons and to a lesser extent in glutamatergic neurons. Expressed in T cells and natural killer cells.

The protein localises to the cell membrane. Functionally, G-protein coupled receptor for Big LEN, a 16-amino acid neuropeptide produced from the precursor protein, proSAAS (encoded by PCSK1N). Acts through a G(i)-alpha-mediated pathway in response to Big LEN. Big LEN-GPR171 system plays an important role in regulating feeding and metabolism. Also plays a role in modulating fear and anxiety-like behaviors in the basolateral amygdala. Big LEN-GPR171 modulates the mu-type opioid receptor signaling and antinociception. Acts as a negative regulator T cell function. The polypeptide is G-protein coupled receptor 171 (Gpr171) (Mus musculus (Mouse)).